A 575-amino-acid polypeptide reads, in one-letter code: E3 ubiquitin-protein ligase IpaH1.4 (575 aa).

Residues 1 to 270 (MIKSTNIQAI…PDYSGPQIFF (270 aa)) form an interaction with target proteins region. 8 LRR repeats span residues 69–90 (LQNQEAELNLSELDLKTLPDLP), 91–115 (PQITTLEIRKNLLTHLPDLPPMLKV), 117–130 (HAQFNQLESLPALP), 131–150 (ETLEELNAGDNKIKELPFLP), 151–170 (ENLTHLRVHNNRLHILPLLP), 171–195 (PELKLLVVSGNRLDSIPPFPDKLEG), 197–209 (ALANNFIEQLPEL), and 210–233 (PFSMNRAVLMNNNLTTLPESVLRL). Residues 271–281 (SMGNSATISAP) form a linker region. Positions 282 to 575 (EHSLADAVTA…LSENGSNHIA (294 aa)) are E3 ubiquitin-protein ligase catalytic domain. The 292-residue stretch at 284-575 (SLADAVTAWF…LSENGSNHIA (292 aa)) folds into the NEL domain. The active-site Glycyl thioester intermediate is cysteine 368.

This sequence belongs to the LRR-containing bacterial E3 ligase family. As to quaternary structure, interacts with human RBCK1/HOIL-1 and RNF31/HOIP components of the LUBAC complex. In terms of processing, ubiquitinated in the presence of host E1 ubiquitin-activating enzyme, E2 ubiquitin-conjugating enzyme and ubiquitin.

The protein resides in the secreted. Its subcellular location is the host cytoplasm. The enzyme catalyses S-ubiquitinyl-[E2 ubiquitin-conjugating enzyme]-L-cysteine + [acceptor protein]-L-lysine = [E2 ubiquitin-conjugating enzyme]-L-cysteine + N(6)-ubiquitinyl-[acceptor protein]-L-lysine.. The protein operates within protein modification; protein ubiquitination. Exists in an autoinhibited state in the absence of substrate protein, probably due to interactions of the leucine-rich repeat domain with the catalytic domain. Is activated upon binding to a substrate protein. E3 ubiquitin-protein ligase effector that inhibits host cell innate immunity during bacterial infection by catalyzing 'Lys-48'-linked polyubiquitination and subsequent degradation of host RNF31/HOIP and RBCK1/HOIL-1. Host RNF31/HOIP is the catalytic component of the LUBAC complex, which conjugates linear ('Met-1'-linked) polyubiquitin chains at the surface of bacteria invading the host cytosol to form the ubiquitin coat surrounding bacteria. The bacterial ubiquitin coat acts as an 'eat-me' signal for xenophagy and promotes NF-kappa-B activation. By promoting degradation of host RNF31/HOIP, IpaH1.4 prevents formation of the bacterial ubiquitin coat and activation of host cell innate immunity. This is E3 ubiquitin-protein ligase IpaH1.4 from Shigella flexneri.